Consider the following 874-residue polypeptide: Pentatricopeptide repeat-containing protein At2g17140 (874 aa).

19 PPR repeats span residues 111–145, 146–180, 181–215, 216–250, 251–285, 290–320, 325–359, 360–394, 395–429, 430–464, 465–499, 523–557, 558–592, 593–627, 628–662, 663–693, 697–731, 732–766, and 767–797; these read SVYLYNLLLESCIKERRVEFVSWLYKDMVLCGIAP, QTYTFNLLIRALCDSSCVDAARELFDEMPEKGCKP, NEFTFGILVRGYCKAGLTDKGLELLNAMESFGVLP, NKVIYNTIVSSFCREGRNDDSEKMVEKMREEGLVP, DIVTFNSRISALCKEGKVLDASRIFSDMELDEYLG, NSITYNLMLKGFCKVGLLEDAKTLFESIREN, SLQSYNIWLQGLVRHGKFIEAETVLKQMTDKGIGP, SIYSYNILMDGLCKLGMLSDAKTIVGLMKRNGVCP, DAVTYGCLLHGYCSVGKVDAAKSLLQEMMRNNCLP, NAYTCNILLHSLWKMGRISEAEELLRKMNEKGYGL, DTVTCNIIVDGLCGSGELDKAIEIVKGMRVHGSAA, DLITYSTLLNGLCKAGRFAEAKNLFAEMMGEKLQP, DSVAYNIFIHHFCKQGKISSAFRVLKDMEKKGCHK, SLETYNSLILGLGIKNQIFEIHGLMDEMKEKGISP, NICTYNTAIQYLCEGEKVEDATNLLDEMMQKNIAP, NVFSFKYLIEAFCKVPDFDMAQEVFETAVSI, KEGLYSLMFNELLAAGQLLKATELLEAVLDRGFEL, GTFLYKDLVESLCKKDELEVASGILHKMIDRGYGF, and DPAALMPVIDGLGKMGNKKEANSFADKMMEM.

The protein belongs to the PPR family. P subfamily.

This Arabidopsis thaliana (Mouse-ear cress) protein is Pentatricopeptide repeat-containing protein At2g17140.